Here is a 282-residue protein sequence, read N- to C-terminus: MNSSSSTMNEEPDALSVVNQLRDLAADPLNRRAIVQDQGCLPGLILFMDHPNPPVVHSALLALRYLAECRANREKMKGELGMMLSLQNVIQKSTTPGETKLLASEIYDILQSSNMADGDSFNEMNSRRRKAQFFLGTTNKRAKTVVLHIDGLDDTSRRNLCEEALLKIKGVISFTFQMAVQRCVVRIRSDLKAEALASAIASTKVMKAQQVVKSESGEEMLVPFQDTPVEVEQNTELPDYLPEDESPTKEQDKAVSRVGSHPEGGASWLSTAANFLSRSFYW.

Position 1 is an N-acetylmethionine (methionine 1). Residues glycine 39–glycine 81 form an ARM repeat. Phosphothreonine is present on threonine 137. 4 positions are modified to phosphoserine: serine 189, serine 246, serine 260, and serine 267. Residues aspartate 239 to histidine 261 form a disordered region. Residues serine 246–valine 255 are compositionally biased toward basic and acidic residues.

In terms of assembly, interacts with mitochondrial contact site and cristae organizing system (MICOS) complex components IMMT/MIC60 and MICOS10/MIC10. Interacts with mitochondrial outer membrane sorting assembly machinery (SAM) complex components SAMM50 and MTX1.

Its subcellular location is the cytoplasm. It localises to the mitochondrion. The protein resides in the mitochondrion outer membrane. Functionally, in association with mitochondrial contact site and cristae organizing system (MICOS) complex components and mitochondrial outer membrane sorting assembly machinery (SAM) complex components may regulate mitochondrial dynamics playing a role in determining mitochondrial length, distribution and motility. The protein is Armadillo repeat-containing protein 1 (ARMC1) of Bos taurus (Bovine).